Consider the following 194-residue polypeptide: FMN-dependent NADH:quinone oxidoreductase (194 aa).

FMN is bound by residues serine 9, 15–17 (SIS), and 85–88 (MYNF).

This sequence belongs to the azoreductase type 1 family. In terms of assembly, homodimer. Requires FMN as cofactor.

It carries out the reaction 2 a quinone + NADH + H(+) = 2 a 1,4-benzosemiquinone + NAD(+). The catalysed reaction is N,N-dimethyl-1,4-phenylenediamine + anthranilate + 2 NAD(+) = 2-(4-dimethylaminophenyl)diazenylbenzoate + 2 NADH + 2 H(+). In terms of biological role, quinone reductase that provides resistance to thiol-specific stress caused by electrophilic quinones. Also exhibits azoreductase activity. Catalyzes the reductive cleavage of the azo bond in aromatic azo compounds to the corresponding amines. The protein is FMN-dependent NADH:quinone oxidoreductase of Xanthomonas oryzae pv. oryzae (strain MAFF 311018).